The chain runs to 128 residues: Infection structure-specific protein 56 (128 aa).

2 stretches are compositionally biased toward polar residues: residues 27-36 and 87-101; these read HATYPQSQPH and TSIS…DSQS. Disordered regions lie at residues 27 to 48 and 86 to 128; these read HATY…AVPS and GTSI…STSA. The segment covering 115 to 128 has biased composition (basic and acidic residues); sequence KDAKKELKDPSTSA.

General role in the development of germlings including formation of the infection structures. The polypeptide is Infection structure-specific protein 56 (INF56) (Uromyces appendiculatus (Rust fungus)).